The primary structure comprises 272 residues: Nitrogenase iron protein (272 aa).

Position 8-15 (8-15 (GKGGIGKS)) interacts with ATP. A [4Fe-4S] cluster-binding site is contributed by Cys94. Arg97 carries the post-translational modification ADP-ribosylarginine; by dinitrogenase reductase ADP-ribosyltransferase. [4Fe-4S] cluster is bound at residue Cys129.

It belongs to the NifH/BchL/ChlL family. As to quaternary structure, homodimer. Requires [4Fe-4S] cluster as cofactor. In terms of processing, the reversible ADP-ribosylation of Arg-97 inactivates the nitrogenase reductase and regulates nitrogenase activity.

It carries out the reaction N2 + 8 reduced [2Fe-2S]-[ferredoxin] + 16 ATP + 16 H2O = H2 + 8 oxidized [2Fe-2S]-[ferredoxin] + 2 NH4(+) + 16 ADP + 16 phosphate + 6 H(+). Its function is as follows. The key enzymatic reactions in nitrogen fixation are catalyzed by the nitrogenase complex, which has 2 components: the iron protein and the molybdenum-iron protein. In Alkaliphilus metalliredigens (strain QYMF), this protein is Nitrogenase iron protein.